Reading from the N-terminus, the 267-residue chain is 2-keto-3-deoxy-L-rhamnonate aldolase (267 aa).

His49 functions as the Proton acceptor in the catalytic mechanism. A substrate-binding site is contributed by Gln151. Residue Glu153 participates in Mg(2+) binding. Substrate-binding residues include Ala178 and Asp179. A Mg(2+)-binding site is contributed by Asp179.

Belongs to the HpcH/HpaI aldolase family. KDR aldolase subfamily. As to quaternary structure, homohexamer. Mg(2+) is required as a cofactor.

The catalysed reaction is 2-dehydro-3-deoxy-L-rhamnonate = (S)-lactaldehyde + pyruvate. Its function is as follows. Catalyzes the reversible retro-aldol cleavage of 2-keto-3-deoxy-L-rhamnonate (KDR) to pyruvate and lactaldehyde. The polypeptide is 2-keto-3-deoxy-L-rhamnonate aldolase (Salmonella dublin (strain CT_02021853)).